We begin with the raw amino-acid sequence, 132 residues long: Small ribosomal subunit protein uS8 (132 aa).

It belongs to the universal ribosomal protein uS8 family. As to quaternary structure, part of the 30S ribosomal subunit. Contacts proteins S5 and S12.

Its function is as follows. One of the primary rRNA binding proteins, it binds directly to 16S rRNA central domain where it helps coordinate assembly of the platform of the 30S subunit. This Rhodopseudomonas palustris (strain BisA53) protein is Small ribosomal subunit protein uS8.